Here is a 526-residue protein sequence, read N- to C-terminus: Transcription factor kayak (526 aa).

2 disordered regions span residues 71 to 165 and 178 to 221; these read PPLA…GTGG and RNTN…NKQA. Composition is skewed to low complexity over residues 78–87 and 133–153; these read NNNNNNNNNG and ISDTSSGATDSTSYQNGHMMG. Residues 154 to 165 are compositionally biased toward gly residues; the sequence is NSGGGNGGGTGG. A compositionally biased stretch (polar residues) spans 178–187; sequence RNTNTSNSAT. Positions 208-271 constitute a bZIP domain; the sequence is EEKRRIRRER…NQLEYFLQAH (64 aa). Residues 210–229 are basic motif; sequence KRRIRRERNKQAAARCRKRR. Residues 236 to 264 form a leucine-zipper region; that stretch reads LTEEVELLEKRGENLKKEMELLNETKNQL. The span at 301–322 shows a compositional bias: low complexity; it reads GSCGSGSSHHNNNSNSNDSSSG. 2 disordered regions span residues 301–345 and 504–526; these read GSCG…DLKP and TSQNKHPLELPTPTTEPSKLVSL. Residues 330–340 show a composition bias toward polar residues; sequence TLNSTGRSNSP. A Phosphoserine modification is found at S339.

The protein belongs to the bZIP family. Fos subfamily. Homodimer. Heterodimer with Jra. The kay-Jra heterodimer binds more stably to the AP-1 site than either of the two proteins alone.

It is found in the nucleus. Functionally, developmentally regulated transcription factor AP-1 binds and recognizes the enhancer DNA sequence: 5'-TGA[CG]TCA-3'. May play a role in the function or determination of a particular subset of cells in the developing embryo. It is able to carry out its function either independently of or in conjunction with Jra. This Drosophila persimilis (Fruit fly) protein is Transcription factor kayak.